The following is a 173-amino-acid chain: Co-chaperone protein HscB homolog (173 aa).

The J domain maps to 5-77 (CHFAQFDLQP…PRRALYLLTL (73 aa)).

Belongs to the HscB family. In terms of assembly, interacts with HscA and stimulates its ATPase activity.

Functionally, co-chaperone involved in the maturation of iron-sulfur cluster-containing proteins. Seems to help targeting proteins to be folded toward HscA. The protein is Co-chaperone protein HscB homolog of Pseudomonas aeruginosa (strain UCBPP-PA14).